Here is a 297-residue protein sequence, read N- to C-terminus: Iron-sulfur cluster assembly SufBD family protein ycf24 (297 aa).

This sequence belongs to the iron-sulfur cluster assembly SufBD family.

It is found in the plastid. The protein localises to the chloroplast. The chain is Iron-sulfur cluster assembly SufBD family protein ycf24 (ycf24) from Antithamnion sp. (Red alga).